We begin with the raw amino-acid sequence, 303 residues long: Mycothiol acetyltransferase (303 aa).

2 consecutive N-acetyltransferase domains span residues 3–152 (VTVT…VSLP) and 155–303 (VRIR…MYRS). Asp-35 serves as a coordination point for 1D-myo-inositol 2-(L-cysteinylamino)-2-deoxy-alpha-D-glucopyranoside. 79 to 81 (LTV) is a binding site for acetyl-CoA. Residues Glu-182, Lys-224, and Glu-237 each contribute to the 1D-myo-inositol 2-(L-cysteinylamino)-2-deoxy-alpha-D-glucopyranoside site. Residues 241–243 (VGV) and 248–254 (QGSGLGR) contribute to the acetyl-CoA site. Tyr-275 lines the 1D-myo-inositol 2-(L-cysteinylamino)-2-deoxy-alpha-D-glucopyranoside pocket.

This sequence belongs to the acetyltransferase family. MshD subfamily. Monomer.

It carries out the reaction 1D-myo-inositol 2-(L-cysteinylamino)-2-deoxy-alpha-D-glucopyranoside + acetyl-CoA = mycothiol + CoA + H(+). In terms of biological role, catalyzes the transfer of acetyl from acetyl-CoA to desacetylmycothiol (Cys-GlcN-Ins) to form mycothiol. The polypeptide is Mycothiol acetyltransferase (Kocuria rhizophila (strain ATCC 9341 / DSM 348 / NBRC 103217 / DC2201)).